A 405-amino-acid chain; its full sequence is Arginine biosynthesis bifunctional protein ArgJ (405 aa).

Substrate is bound by residues threonine 152, lysine 178, threonine 189, glutamate 276, asparagine 400, and threonine 405. Threonine 189 serves as the catalytic Nucleophile.

It belongs to the ArgJ family. Heterotetramer of two alpha and two beta chains.

Its subcellular location is the cytoplasm. It catalyses the reaction N(2)-acetyl-L-ornithine + L-glutamate = N-acetyl-L-glutamate + L-ornithine. The enzyme catalyses L-glutamate + acetyl-CoA = N-acetyl-L-glutamate + CoA + H(+). Its pathway is amino-acid biosynthesis; L-arginine biosynthesis; L-ornithine and N-acetyl-L-glutamate from L-glutamate and N(2)-acetyl-L-ornithine (cyclic): step 1/1. It functions in the pathway amino-acid biosynthesis; L-arginine biosynthesis; N(2)-acetyl-L-ornithine from L-glutamate: step 1/4. Its function is as follows. Catalyzes two activities which are involved in the cyclic version of arginine biosynthesis: the synthesis of N-acetylglutamate from glutamate and acetyl-CoA as the acetyl donor, and of ornithine by transacetylation between N(2)-acetylornithine and glutamate. The polypeptide is Arginine biosynthesis bifunctional protein ArgJ (Pseudomonas syringae pv. tomato (strain ATCC BAA-871 / DC3000)).